A 283-amino-acid polypeptide reads, in one-letter code: Pantothenate synthetase (283 aa).

30–37 (MGNLHAGH) lines the ATP pocket. H37 functions as the Proton donor in the catalytic mechanism. (R)-pantoate is bound at residue Q61. Q61 lines the beta-alanine pocket. Residue 149-152 (GEKD) coordinates ATP. Q155 contacts (R)-pantoate. Residues V178 and 186-189 (LSSR) each bind ATP.

It belongs to the pantothenate synthetase family. Homodimer.

It is found in the cytoplasm. The catalysed reaction is (R)-pantoate + beta-alanine + ATP = (R)-pantothenate + AMP + diphosphate + H(+). Its pathway is cofactor biosynthesis; (R)-pantothenate biosynthesis; (R)-pantothenate from (R)-pantoate and beta-alanine: step 1/1. In terms of biological role, catalyzes the condensation of pantoate with beta-alanine in an ATP-dependent reaction via a pantoyl-adenylate intermediate. This chain is Pantothenate synthetase, found in Azotobacter vinelandii (strain DJ / ATCC BAA-1303).